Here is a 286-residue protein sequence, read N- to C-terminus: ATP phosphoribosyltransferase (286 aa).

This sequence belongs to the ATP phosphoribosyltransferase family. Long subfamily. Mg(2+) serves as cofactor.

It localises to the cytoplasm. The catalysed reaction is 1-(5-phospho-beta-D-ribosyl)-ATP + diphosphate = 5-phospho-alpha-D-ribose 1-diphosphate + ATP. The protein operates within amino-acid biosynthesis; L-histidine biosynthesis; L-histidine from 5-phospho-alpha-D-ribose 1-diphosphate: step 1/9. Feedback inhibited by histidine. Catalyzes the condensation of ATP and 5-phosphoribose 1-diphosphate to form N'-(5'-phosphoribosyl)-ATP (PR-ATP). Has a crucial role in the pathway because the rate of histidine biosynthesis seems to be controlled primarily by regulation of HisG enzymatic activity. This chain is ATP phosphoribosyltransferase, found in Paenarthrobacter aurescens (strain TC1).